The sequence spans 432 residues: Glutamate-1-semialdehyde 2,1-aminomutase (432 aa).

Lys269 is subject to N6-(pyridoxal phosphate)lysine.

It belongs to the class-III pyridoxal-phosphate-dependent aminotransferase family. HemL subfamily. Homodimer. It depends on pyridoxal 5'-phosphate as a cofactor.

Its subcellular location is the cytoplasm. It carries out the reaction (S)-4-amino-5-oxopentanoate = 5-aminolevulinate. It participates in porphyrin-containing compound metabolism; protoporphyrin-IX biosynthesis; 5-aminolevulinate from L-glutamyl-tRNA(Glu): step 2/2. It functions in the pathway porphyrin-containing compound metabolism; chlorophyll biosynthesis. The polypeptide is Glutamate-1-semialdehyde 2,1-aminomutase (Chloroherpeton thalassium (strain ATCC 35110 / GB-78)).